Here is a 778-residue protein sequence, read N- to C-terminus: DISP complex protein LRCH3 (778 aa).

LRR repeat units follow at residues 56-79, 81-104, 105-127, 128-150, 152-172, 173-195, 197-218, 220-239, 240-264, and 266-290; these read AAVT…AANH, LTDT…ACHF, VSLE…VLNL, QALT…LCNL, LKVL…IGHL, RHLT…IGNL, ALRD…LAEV, LIRL…CYRN, LRHL…CIKG, and IHIF…ERRP. The segment at 56 to 290 is mediates interaction with DOCK7; that stretch reads AAVTGVLSLS…PDLPDYERRP (235 aa). A phosphoserine mark is found at serine 324, serine 415, and serine 419. The tract at residues 382–642 is mediates direct interaction with MYO6; it reads TTEEEENDVK…PATDPTDAIT (261 aa). The tract at residues 511-536 is disordered; the sequence is QKASHNPQRQQPPGNGECSFPSRRSQ. Positions 514-523 are enriched in polar residues; the sequence is SHNPQRQQPP. Residues serine 608 and serine 625 each carry the phosphoserine modification. Residues 645-758 form the Calponin-homology (CH) domain; the sequence is REEELKLIDQ…VTVQALLELA (114 aa). Residues 758–778 are disordered; it reads APPKQPPPQQPQQQQPQLSAV. Residues 768-778 show a composition bias toward low complexity; sequence PQQQQPQLSAV.

As to quaternary structure, component of the DOCK7-induced septin displacement/DISP complex, at least composed of DOCK7, LRCH3 and MYO6.

It is found in the cytoplasm. As part of the DISP complex, may regulate the association of septins with actin and thereby regulate the actin cytoskeleton. In Mus musculus (Mouse), this protein is DISP complex protein LRCH3.